The sequence spans 517 residues: Bifunctional purine biosynthesis protein PurH (517 aa).

One can recognise an MGS-like domain in the interval 1–145; the sequence is MSPLALVSVS…KNHKDVSVLV (145 aa).

Belongs to the PurH family.

It catalyses the reaction (6R)-10-formyltetrahydrofolate + 5-amino-1-(5-phospho-beta-D-ribosyl)imidazole-4-carboxamide = 5-formamido-1-(5-phospho-D-ribosyl)imidazole-4-carboxamide + (6S)-5,6,7,8-tetrahydrofolate. The enzyme catalyses IMP + H2O = 5-formamido-1-(5-phospho-D-ribosyl)imidazole-4-carboxamide. It functions in the pathway purine metabolism; IMP biosynthesis via de novo pathway; 5-formamido-1-(5-phospho-D-ribosyl)imidazole-4-carboxamide from 5-amino-1-(5-phospho-D-ribosyl)imidazole-4-carboxamide (10-formyl THF route): step 1/1. Its pathway is purine metabolism; IMP biosynthesis via de novo pathway; IMP from 5-formamido-1-(5-phospho-D-ribosyl)imidazole-4-carboxamide: step 1/1. The chain is Bifunctional purine biosynthesis protein PurH from Prochlorococcus marinus (strain AS9601).